Consider the following 151-residue polypeptide: Pyruvoyl-dependent arginine decarboxylase (151 aa).

Serine 42 carries the pyruvic acid (Ser) modification.

Belongs to the PdaD family. It depends on pyruvate as a cofactor.

The catalysed reaction is L-arginine + H(+) = agmatine + CO2. In Methanothermobacter thermautotrophicus (strain ATCC 29096 / DSM 1053 / JCM 10044 / NBRC 100330 / Delta H) (Methanobacterium thermoautotrophicum), this protein is Pyruvoyl-dependent arginine decarboxylase.